The chain runs to 413 residues: Serine hydroxymethyltransferase (413 aa).

(6S)-5,6,7,8-tetrahydrofolate-binding positions include L119 and 123–125 (GHL). K228 is modified (N6-(pyridoxal phosphate)lysine). (6S)-5,6,7,8-tetrahydrofolate is bound at residue 351–353 (SPF).

This sequence belongs to the SHMT family. In terms of assembly, homodimer. Pyridoxal 5'-phosphate serves as cofactor.

The protein resides in the cytoplasm. It carries out the reaction (6R)-5,10-methylene-5,6,7,8-tetrahydrofolate + glycine + H2O = (6S)-5,6,7,8-tetrahydrofolate + L-serine. Its pathway is one-carbon metabolism; tetrahydrofolate interconversion. It participates in amino-acid biosynthesis; glycine biosynthesis; glycine from L-serine: step 1/1. Functionally, catalyzes the reversible interconversion of serine and glycine with tetrahydrofolate (THF) serving as the one-carbon carrier. This reaction serves as the major source of one-carbon groups required for the biosynthesis of purines, thymidylate, methionine, and other important biomolecules. Also exhibits THF-independent aldolase activity toward beta-hydroxyamino acids, producing glycine and aldehydes, via a retro-aldol mechanism. This chain is Serine hydroxymethyltransferase, found in Clostridium botulinum (strain Okra / Type B1).